We begin with the raw amino-acid sequence, 310 residues long: Probable manganese-dependent inorganic pyrophosphatase (310 aa).

His9, Asp13, Asp15, Asp76, His98, and Asp150 together coordinate Mn(2+).

This sequence belongs to the PPase class C family. In terms of assembly, homodimer. It depends on Mn(2+) as a cofactor.

It is found in the cytoplasm. It carries out the reaction diphosphate + H2O = 2 phosphate + H(+). This chain is Probable manganese-dependent inorganic pyrophosphatase (ppaC), found in Streptococcus mutans serotype c (strain ATCC 700610 / UA159).